The following is a 276-amino-acid chain: tRNA dimethylallyltransferase (276 aa).

The tract at residues 9-12 is interaction with substrate tRNA; sequence DSLS.

The protein belongs to the IPP transferase family. In terms of assembly, monomer. Mg(2+) is required as a cofactor.

It carries out the reaction adenosine(37) in tRNA + dimethylallyl diphosphate = N(6)-dimethylallyladenosine(37) in tRNA + diphosphate. Catalyzes the transfer of a dimethylallyl group onto the adenine at position 37 in tRNAs that read codons beginning with uridine, leading to the formation of N6-(dimethylallyl)adenosine (i(6)A). The protein is tRNA dimethylallyltransferase (miaA) of Helicobacter pylori (strain HPAG1).